The chain runs to 939 residues: Isoleucine--tRNA ligase (939 aa).

The 'HIGH' region signature appears at 59-69 (PYANGDIHIGH). L-isoleucyl-5'-AMP is bound at residue glutamate 570. A 'KMSKS' region motif is present at residues 611–615 (KMSKS). Lysine 614 lines the ATP pocket. Residues cysteine 902, cysteine 905, cysteine 922, and cysteine 925 each contribute to the Zn(2+) site.

The protein belongs to the class-I aminoacyl-tRNA synthetase family. IleS type 1 subfamily. In terms of assembly, monomer. It depends on Zn(2+) as a cofactor.

The protein resides in the cytoplasm. It catalyses the reaction tRNA(Ile) + L-isoleucine + ATP = L-isoleucyl-tRNA(Ile) + AMP + diphosphate. Functionally, catalyzes the attachment of isoleucine to tRNA(Ile). As IleRS can inadvertently accommodate and process structurally similar amino acids such as valine, to avoid such errors it has two additional distinct tRNA(Ile)-dependent editing activities. One activity is designated as 'pretransfer' editing and involves the hydrolysis of activated Val-AMP. The other activity is designated 'posttransfer' editing and involves deacylation of mischarged Val-tRNA(Ile). The chain is Isoleucine--tRNA ligase from Nitrosomonas europaea (strain ATCC 19718 / CIP 103999 / KCTC 2705 / NBRC 14298).